The primary structure comprises 459 residues: Elongation factor 1-alpha 1 (459 aa).

In terms of domain architecture, tr-type G spans 5 to 242; that stretch reads KTHINIVVIG…DCIIPPQRPT (238 aa). Residues 14 to 21 are G1; the sequence is GHVDSGKS. Residues 70 to 74 form a G2 region; sequence GITID. Residues 91–94 form a G3 region; it reads DAPG. The tract at residues 153 to 156 is G4; sequence NKMD. Residues 194–196 are G5; it reads SGF. A 5-glutamyl glycerylphosphorylethanolamine mark is found at glutamate 301 and glutamate 374.

Belongs to the TRAFAC class translation factor GTPase superfamily. Classic translation factor GTPase family. EF-Tu/EF-1A subfamily.

Its subcellular location is the cytoplasm. This protein promotes the GTP-dependent binding of aminoacyl-tRNA to the A-site of ribosomes during protein biosynthesis. This Oscheius tipulae protein is Elongation factor 1-alpha 1 (eft-1).